The following is a 262-amino-acid chain: Pyridoxine 5'-phosphate synthase (262 aa).

Residue Asn-6 participates in 3-amino-2-oxopropyl phosphate binding. 1-deoxy-D-xylulose 5-phosphate is bound at residue 8 to 9; sequence DH. 3-amino-2-oxopropyl phosphate is bound at residue Arg-17. Catalysis depends on His-43, which acts as the Proton acceptor. Arg-45 and His-50 together coordinate 1-deoxy-D-xylulose 5-phosphate. The Proton acceptor role is filled by Glu-70. Thr-102 provides a ligand contact to 1-deoxy-D-xylulose 5-phosphate. The active-site Proton donor is His-215. Residues Gly-216 and 237-238 each bind 3-amino-2-oxopropyl phosphate; that span reads GH.

This sequence belongs to the PNP synthase family. In terms of assembly, homooctamer; tetramer of dimers.

The protein resides in the cytoplasm. It carries out the reaction 3-amino-2-oxopropyl phosphate + 1-deoxy-D-xylulose 5-phosphate = pyridoxine 5'-phosphate + phosphate + 2 H2O + H(+). Its pathway is cofactor biosynthesis; pyridoxine 5'-phosphate biosynthesis; pyridoxine 5'-phosphate from D-erythrose 4-phosphate: step 5/5. Catalyzes the complicated ring closure reaction between the two acyclic compounds 1-deoxy-D-xylulose-5-phosphate (DXP) and 3-amino-2-oxopropyl phosphate (1-amino-acetone-3-phosphate or AAP) to form pyridoxine 5'-phosphate (PNP) and inorganic phosphate. The chain is Pyridoxine 5'-phosphate synthase from Helicobacter pylori (strain G27).